We begin with the raw amino-acid sequence, 449 residues long: 5'-deoxyadenosine deaminase (449 aa).

2 residues coordinate Zn(2+): H79 and H81. Substrate is bound by residues E108 and H200. H227 serves as a coordination point for Zn(2+). Residues E230 and D316 each coordinate substrate. D316 serves as a coordination point for Zn(2+).

This sequence belongs to the metallo-dependent hydrolases superfamily. MTA/SAH deaminase family. In terms of assembly, homotetramer. It depends on Zn(2+) as a cofactor.

The enzyme catalyses 5'-deoxyadenosine + H2O + H(+) = 5'-deoxyinosine + NH4(+). It carries out the reaction S-adenosyl-L-homocysteine + H2O + H(+) = S-inosyl-L-homocysteine + NH4(+). The catalysed reaction is S-methyl-5'-thioadenosine + H2O + H(+) = S-methyl-5'-thioinosine + NH4(+). It catalyses the reaction adenosine + H2O + H(+) = inosine + NH4(+). It participates in amino-acid biosynthesis; S-adenosyl-L-methionine biosynthesis. In terms of biological role, catalyzes the deamination of three SAM-derived enzymatic products, namely 5'-deoxyadenosine, S-adenosyl-L-homocysteine, and 5'-methylthioadenosine, to produce the inosine analogs. Can also deaminate adenosine. The preferred substrate for this enzyme is 5'-deoxyadenosine, but all these substrates are efficiently deaminated. Likely functions in a S-adenosyl-L-methionine (SAM) recycling pathway from S-adenosyl-L-homocysteine (SAH) produced from SAM-dependent methylation reactions. May also be involved in the recycling of 5'-deoxyadenosine, whereupon the 5'-deoxyribose moiety of 5'-deoxyinosine is further metabolized to deoxyhexoses used for the biosynthesis of aromatic amino acids in methanogens. The protein is 5'-deoxyadenosine deaminase of Methanospirillum hungatei JF-1 (strain ATCC 27890 / DSM 864 / NBRC 100397 / JF-1).